The following is a 215-amino-acid chain: HTH-type transcriptional regulator for conjugative element R391 (215 aa).

Residues 8-61 enclose the HTH cro/C1-type domain; that stretch reads LNHALQLTGVTQSELARRIGIKQQSISQICSGKSARSRYTMQIAEALRVNAHWL. A DNA-binding region (H-T-H motif) is located at residues 19 to 38; the sequence is QSELARRIGIKQQSISQICS.

In terms of biological role, may control the expression of the integrase and inhibit excision of the mobile element R391, and regulate the expression of other genes as well. The polypeptide is HTH-type transcriptional regulator for conjugative element R391 (Providencia rettgeri).